We begin with the raw amino-acid sequence, 495 residues long: GTPase Der (495 aa).

One can recognise an EngA-type G 1 domain in the interval 3-178; it reads AKIALVGRPN…EMRDLLPEED (176 aa). Residues 9-16, 57-61, and 130-133 each bind GTP; these read GRPNVGKS, DTGGI, and NKVD. The segment at 190–227 is disordered; that stretch reads TAVASADADVDADVETEGGTSASETEEGITEETVEDEP. Over residues 213–227 the composition is skewed to acidic residues; that stretch reads ETEEGITEETVEDEP. Residues 231–404 form the EngA-type G 2 domain; that stretch reads LRLCMLGRPN…LAARIRRECS (174 aa). GTP is bound by residues 237–244, 284–288, and 349–352; these read GRPNAGKS, DTAGV, and NKMD. Residues 405-489 form the KH-like domain; sequence VRIPTGQLNR…PMRVHFRSSH (85 aa).

It belongs to the TRAFAC class TrmE-Era-EngA-EngB-Septin-like GTPase superfamily. EngA (Der) GTPase family. As to quaternary structure, associates with the 50S ribosomal subunit.

Functionally, GTPase that plays an essential role in the late steps of ribosome biogenesis. The chain is GTPase Der from Nitratidesulfovibrio vulgaris (strain DP4) (Desulfovibrio vulgaris).